The chain runs to 545 residues: Chaperonin GroEL 2 (545 aa).

ATP-binding positions include 29-32, 86-90, G413, 479-481, and D495; these read TLGP, DGTTT, and NAA.

The protein belongs to the chaperonin (HSP60) family. In terms of assembly, forms a cylinder of 14 subunits composed of two heptameric rings stacked back-to-back. Interacts with the co-chaperonin GroES.

It is found in the cytoplasm. The enzyme catalyses ATP + H2O + a folded polypeptide = ADP + phosphate + an unfolded polypeptide.. In terms of biological role, together with its co-chaperonin GroES, plays an essential role in assisting protein folding. The GroEL-GroES system forms a nano-cage that allows encapsulation of the non-native substrate proteins and provides a physical environment optimized to promote and accelerate protein folding. The protein is Chaperonin GroEL 2 of Prochlorococcus marinus (strain MIT 9215).